The sequence spans 151 residues: Putative pre-16S rRNA nuclease (151 aa).

It belongs to the YqgF nuclease family.

The protein resides in the cytoplasm. In terms of biological role, could be a nuclease involved in processing of the 5'-end of pre-16S rRNA. The polypeptide is Putative pre-16S rRNA nuclease (Pelagibacter ubique (strain HTCC1062)).